The primary structure comprises 430 residues: KIN17-like protein (430 aa).

The C2H2-type zinc finger occupies 28–50 (CQMCQKQCRDENGFKCHCMSESH). A winged helix-turn-helix (wHTH) region spans residues 51–160 (QRQMQVFGQA…KARLKRKRIK (110 aa)). Residues 147–183 (EQAVKARLKRKRIKSDLAEDERQERMIARQIERAQQS) adopt a coiled-coil conformation. Residues 155–158 (KRKR) carry the Nuclear localization signal (NLS) motif. 2 disordered regions span residues 179–230 (RAQQ…ANKA) and 261–284 (EEED…GKDA). Residues 191-224 (LGDDASPDGSEGESGSEDEYSDSENDHEGQEEDA) show a composition bias toward acidic residues. Residues 261–278 (EEEDEVSARDKEKEELAK) are compositionally biased toward basic and acidic residues. Residues 283–312 (DAINAAEARRSALDELMKEEEKAKERSNRK) adopt a coiled-coil conformation. The C-terminal subdomain A stretch occupies residues 319-370 (GIVVKVMSKSLAEKGYCKQKGVVKRVIDKYVGEIEMLESKHVLRVDQDELET). A C-terminal subdomain B region spans residues 376–427 (GGLVRIVNGAYRGSNARLLSVDTERFCAKVQVEKGLYDGKVLKAIEYEDICK).

This sequence belongs to the KIN17 family.

Its subcellular location is the nucleus. This Oryza sativa subsp. japonica (Rice) protein is KIN17-like protein.